The following is a 957-amino-acid chain: Sorting nexin-13 (957 aa).

The region spanning 97–284 (ANIIDEPLQQ…YVIWMIRDSN (188 aa)) is the PXA domain. An RGS domain is found at 373-511 (PLDSILVDNV…SFRQNALYVR (139 aa)). Residues 559-680 (VQLHAYISDT…DFLENKAYSK (122 aa)) enclose the PX domain. A 1,2-diacyl-sn-glycero-3-phospho-(1D-myo-inositol-3-phosphate)-binding residues include Arg-601, Ser-603, Lys-628, and Arg-642.

It belongs to the sorting nexin family.

It localises to the early endosome membrane. Its function is as follows. May be involved in several stages of intracellular trafficking. Acts as a GAP for Galphas. May play a role in endosome homeostasis. The protein is Sorting nexin-13 (Snx13) of Mus musculus (Mouse).